The chain runs to 184 residues: Gastrokine-1 (184 aa).

A signal peptide spans 1 to 20; sequence MKLTMFVVGLLGLLAAPGFA. A BRICHOS domain is found at 54-148; sequence NNGWDSWNSL…MCRGIPTYVA (95 aa). A disulfide bridge links Cys81 with Cys140.

The protein belongs to the gastrokine family. Expressed in the stomach. Highly expressed specifically in surface cells of the antrum mucosa from where it is secreted.

The protein localises to the secreted. Its subcellular location is the cytoplasmic granule. It localises to the golgi apparatus. Has mitogenic activity and may be involved in maintaining the integrity of the gastric mucosal epithelium. This is Gastrokine-1 (Gkn1) from Mus musculus (Mouse).